The following is a 452-amino-acid chain: MALSIKEDFSSAFAKNESAVNSSTFNNNMKTWKIQKRFQILYVFFFLLITGALFYYLIDNVLFPKNKKINEIMNTSKHVIIGFSIENSHDRIMKTVKQHRLKNYIKESLKFFKTGLTQKPHLGNAGDSVTLNDVANVMYYGEAQIGDNKQKFAFIFDTGSANLWVPSAQCNTIGCKTKNLYDSNKSKTYEKDGTKVEMNYVSGTVSGFFSKDIVTIANLSFPYKFIEVTDTNGFEPAYTLGQFDGIVGLGWKDLSIGSVDPVVVELKNQNKIEQAVFTFYLPFDDKHKGYLTIGGIEDRFYEGQLTYEKLNHDLYWQVDLDLHFGNLTVEKATAIVDSGTSSITAPTEFLNKFFEGLDVVKIPFLPLYITTCNNPKLPTLEFRSATNVYTLEPEYYLQQIFDFGISLCMVSIIPVDLNKNTFILGDPFMRKYFTVFDYDNHTVGFALAKKKL.

Residues M1–R37 are Cytoplasmic-facing. Residues M1–G123 constitute a propeptide that is removed on maturation. The chain crosses the membrane as a helical; Signal-anchor for type II membrane protein span at residues F38 to I58. The Lumenal portion of the chain corresponds to D59–L452. One can recognise a Peptidase A1 domain in the interval Y139–A446. D157 is a catalytic residue. Cysteines 170 and 175 form a disulfide. D337 is an active-site residue. A disulfide bridge links C372 with C408.

This sequence belongs to the peptidase A1 family. In terms of processing, not N-glycosylated. Proteolytically cleaved into the soluble active mature form in the digestive vacuole by cysteine protease falcipains; the process begins at the early ring stage. Proteolysis requires an acidic environment.

Its subcellular location is the membrane. The protein localises to the vacuole lumen. It is found in the vacuole membrane. It carries out the reaction Hydrolysis of the 33-Phe-|-Leu-34 bond in the alpha-chain of hemoglobin, leading to denaturation of molecule.. Its activity is regulated as follows. Inhibited by KNI derived compounds KNI-10333 and to a lesser extent KNI-10743. Its function is as follows. During the asexual blood stage, catalyzes the initial cleavage of native host hemoglobin (Hb) resulting in Hb denaturation; specifically cleaves between Phe-33 and Leu-34 of Hb alpha-chain. Digestion of host Hb is an essential step which provides the parasite with amino acids for protein synthesis, and regulates osmolarity. The protein is Plasmepsin I of Plasmodium falciparum (isolate 3D7).